A 380-amino-acid chain; its full sequence is Erythronate-4-phosphate dehydrogenase (380 aa).

Substrate is bound by residues S45 and T66. NAD(+) is bound by residues D146, T174, 205–207 (ASR), and D231. The active site involves R207. Residue E236 is part of the active site. The active-site Proton donor is the H253. G256 lines the NAD(+) pocket. Y257 is a substrate binding site.

This sequence belongs to the D-isomer specific 2-hydroxyacid dehydrogenase family. PdxB subfamily. As to quaternary structure, homodimer.

The protein resides in the cytoplasm. The catalysed reaction is 4-phospho-D-erythronate + NAD(+) = (R)-3-hydroxy-2-oxo-4-phosphooxybutanoate + NADH + H(+). Its pathway is cofactor biosynthesis; pyridoxine 5'-phosphate biosynthesis; pyridoxine 5'-phosphate from D-erythrose 4-phosphate: step 2/5. In terms of biological role, catalyzes the oxidation of erythronate-4-phosphate to 3-hydroxy-2-oxo-4-phosphonooxybutanoate. The protein is Erythronate-4-phosphate dehydrogenase of Pseudomonas putida (strain GB-1).